The following is a 245-amino-acid chain: NAD-dependent protein deacetylase (245 aa).

The 245-residue stretch at 1–245 (MIFVQQFEEV…EFVEGLSSRK (245 aa)) folds into the Deacetylase sirtuin-type domain. 8 residues coordinate NAD(+): Ala26, Thr30, Phe37, Arg38, Gln105, Ile107, Asp108, and His123. Phe37 is a binding site for nicotinamide. 2 residues coordinate nicotinamide: Ile107 and Asp108. Catalysis depends on His123, which acts as the Proton acceptor. Positions 131, 134, 151, and 154 each coordinate Zn(2+). 4 residues coordinate NAD(+): Thr190, Ser191, Asn216, and Ile234.

It belongs to the sirtuin family. Class U subfamily. It depends on Zn(2+) as a cofactor.

The protein resides in the cytoplasm. The enzyme catalyses N(6)-acetyl-L-lysyl-[protein] + NAD(+) + H2O = 2''-O-acetyl-ADP-D-ribose + nicotinamide + L-lysyl-[protein]. Its function is as follows. NAD-dependent protein deacetylase which modulates the activities of several enzymes which are inactive in their acetylated form. This is NAD-dependent protein deacetylase from Bacillus cereus (strain ZK / E33L).